We begin with the raw amino-acid sequence, 275 residues long: Orotidine 5'-phosphate decarboxylase (275 aa).

The active-site Proton donor is the Lys101.

Belongs to the OMP decarboxylase family. Type 2 subfamily.

The catalysed reaction is orotidine 5'-phosphate + H(+) = UMP + CO2. Its pathway is pyrimidine metabolism; UMP biosynthesis via de novo pathway; UMP from orotate: step 2/2. This chain is Orotidine 5'-phosphate decarboxylase, found in Leptospira interrogans serogroup Icterohaemorrhagiae serovar Lai (strain 56601).